A 369-amino-acid chain; its full sequence is 4beta-methylsterol monooxygenase (369 aa).

The Rieske domain occupies 29 to 135; it reads WYVVEIDGRL…VKAQWGLIWL (107 aa). [2Fe-2S] cluster contacts are provided by cysteine 70, histidine 72, cysteine 89, and histidine 92.

[2Fe-2S] cluster serves as cofactor.

It carries out the reaction a 3beta-hydroxy-4,4-dimethylsteroid + 3 NADH + 3 O2 + 2 H(+) = a 3beta-hydroxy-4alpha-methylsteroid-4beta-carboxylate + 3 NAD(+) + 4 H2O. The catalysed reaction is 4,4-dimethyl-5alpha-cholesta-8,24-dien-3beta-ol + 3 NADH + 3 O2 + 2 H(+) = 4beta-carboxy-4alpha-methyl-5alpha-cholesta-8,24-dien-3beta-ol + 3 NAD(+) + 4 H2O. The enzyme catalyses a 3beta-hydroxy-4,4-dimethylsteroid + NADH + O2 + H(+) = a 3beta-hydroxy-4beta-hydroxymethyl-4alpha-methylsteroid + NAD(+) + H2O. It catalyses the reaction a 3beta-hydroxy-4beta-hydroxymethyl-4alpha-methylsteroid + NADH + O2 + H(+) = a 3beta-hydroxy-4beta-formyl-4alpha-methylsteroid + NAD(+) + 2 H2O. It carries out the reaction a 3beta-hydroxy-4beta-formyl-4alpha-methylsteroid + NADH + O2 = a 3beta-hydroxy-4alpha-methylsteroid-4beta-carboxylate + NAD(+) + H2O. The catalysed reaction is 4,4-dimethyl-5alpha-cholesta-8,24-dien-3beta-ol + NADH + O2 + H(+) = 4beta-hydroxymethyl-4alpha-methylzymosterol + NAD(+) + H2O. The enzyme catalyses 4beta-hydroxymethyl-4alpha-methylzymosterol + NADH + O2 + H(+) = 4beta-formylmethyl-4alpha-methyl-5alpha-cholesta-8,24-dien-3beta-ol + NAD(+) + 2 H2O. It catalyses the reaction 4beta-formylmethyl-4alpha-methyl-5alpha-cholesta-8,24-dien-3beta-ol + NADH + O2 = 4beta-carboxy-4alpha-methyl-5alpha-cholesta-8,24-dien-3beta-ol + NAD(+) + H2O. Its pathway is steroid biosynthesis; sterol biosynthesis. Its function is as follows. Participates in the biosynthesis of bacterial sterols. Together with SdmB, removes one methyl group from the C-4 position of 4,4-dimethylated steroid molecules. SdmA oxidizes the sterol 4beta-methyl group into first a hydroxyl, then an aldehyde and finally a carboxylic acid group. The chain is 4beta-methylsterol monooxygenase from Methylococcus capsulatus (strain ATCC 33009 / NCIMB 11132 / Bath).